Here is a 936-residue protein sequence, read N- to C-terminus: Calcium homeostasis endoplasmic reticulum protein (936 aa).

At methionine 1 the chain carries N-acetylmethionine. One copy of the SURP motif repeat lies at valine 15 to lysine 57. Position 18 is an N6-acetyllysine (lysine 18). The tract at residues glutamate 77–threonine 102 is disordered. Residues alanine 81–alanine 91 are compositionally biased toward pro residues. A CID domain is found at glutamate 149–glycine 289. The interval leucine 328–aspartate 646 is disordered. Residues glutamine 330 to glutamine 355 show a composition bias toward low complexity. Residues threonine 363–threonine 383 show a composition bias toward pro residues. Residues proline 395–glycine 405 show a composition bias toward polar residues. A compositionally biased stretch (low complexity) spans proline 488 to glutamine 500. Residues proline 534–proline 550 show a composition bias toward pro residues. Positions histidine 551–phenylalanine 560 are enriched in low complexity. A compositionally biased stretch (basic and acidic residues) spans methionine 561–glutamate 572. The span at proline 594–proline 603 shows a compositional bias: basic residues. Residue tyrosine 723 is modified to Phosphotyrosine. The interval arginine 731 to aspartate 887 is disordered. Residues serine 748 to serine 758 are compositionally biased toward basic residues. The span at serine 759–serine 773 shows a compositional bias: low complexity. Over residues serine 774–serine 824 the composition is skewed to basic residues. Phosphoserine is present on residues serine 822, serine 824, and serine 826. The residue at position 828 (threonine 828) is a Phosphothreonine. Residue serine 837 is modified to Phosphoserine. The 51-residue stretch at glutamate 850 to aspartate 900 folds into the G-patch domain. Residue lysine 853 forms a Glycyl lysine isopeptide (Lys-Gly) (interchain with G-Cter in SUMO2) linkage. Phosphoserine is present on residues serine 864 and serine 866. Lysine 881 is covalently cross-linked (Glycyl lysine isopeptide (Lys-Gly) (interchain with G-Cter in SUMO2)). Lysine 888 is subject to N6-acetyllysine. At serine 913 the chain carries Phosphoserine.

It localises to the cytoplasm. The protein resides in the perinuclear region. It is found in the endoplasmic reticulum. Involved in calcium homeostasis, growth and proliferation. In Mus musculus (Mouse), this protein is Calcium homeostasis endoplasmic reticulum protein.